A 222-amino-acid chain; its full sequence is Peroxisomal membrane protein 11-4 (222 aa).

Residues 1–81 (MSAGDTLDKL…LNGLRRAPGE (81 aa)) lie on the Cytoplasmic side of the membrane. The chain crosses the membrane as a helical span at residues 82–102 (FGALAVLANAGEMVYFFFDHF). Residues 103–196 (TWLSRVGVLD…IGIADIEPNP (94 aa)) are Lumenal-facing. The helical transmembrane segment at 197 to 217 (FCNHAVTLGISGLVSAWAGWY) threads the bilayer. The Cytoplasmic segment spans residues 218–222 (RNWPS).

It belongs to the peroxin-11 family. Expressed in seedlings, shoots, leaf sheaths and flag leaf.

It localises to the peroxisome membrane. Involved in peroxisomal proliferation. In Oryza sativa subsp. indica (Rice), this protein is Peroxisomal membrane protein 11-4 (PEX11-4).